Here is a 368-residue protein sequence, read N- to C-terminus: G-protein coupled receptor 183-A (368 aa).

The Extracellular segment spans residues 1–27 (METTSANFTQNDSNVCTNLYNHRGWAQ). 2 N-linked (GlcNAc...) asparagine glycosylation sites follow: asparagine 7 and asparagine 11. A helical transmembrane segment spans residues 28-53 (YFLPAMYSLICIVGLLGNVLALHVIW). At 54 to 73 (PNLKKINSTTLYSANLVVSD) the chain is on the cytoplasmic side. Residues 74-91 (ILFSLALPLRVVYYARGF) form a helical membrane-spanning segment. The Extracellular segment spans residues 92–101 (DWPMGEGLCK). Cysteine 100 and cysteine 178 are oxidised to a cystine. The helical transmembrane segment at 102-123 (AVALLFYINMYAGVNFMTCLSV) threads the bilayer. Over 124-145 (DRFIAVVLPLRFSRFRKVQKVR) the chain is Cytoplasmic. The helical transmembrane segment at 146–164 (YICGVVWVVVLMQTLPLLS) threads the bilayer. Over 165–189 (MPMTNIEQSGHITCMEYPNFEKIDN) the chain is Extracellular. A helical transmembrane segment spans residues 190–212 (LPVMLIGAVVLGFGIPVITILVC). Topologically, residues 213–238 (YTALCLKLRHLAKSNKLTEKSGRSSK) are cytoplasmic. A helical membrane pass occupies residues 239 to 262 (AIGVICTVILVFVVCYSPYHVDLL). The Extracellular segment spans residues 263–282 (QYMIKKLRYDPDCSELHKFQ). A helical transmembrane segment spans residues 283-307 (ISLHITVCFMNLNSCLDPFIYFFAC). Residues 308–368 (KGYKKKVLKL…SSVLLNSLEQ (61 aa)) lie on the Cytoplasmic side of the membrane.

Belongs to the G-protein coupled receptor 1 family.

The protein localises to the cell membrane. In terms of biological role, G-protein coupled receptor expressed in lymphocytes that acts as a chemotactic receptor for B-cells, T-cells, splenic dendritic cells, monocytes/macrophages and astrocytes. Receptor for oxysterol 7-alpha,25-dihydroxycholesterol (7-alpha,25-OHC) and other related oxysterols. Mediates cell positioning and movement of a number of cells by binding the 7-alpha,25-OHC ligand that forms a chemotactic gradient. Binding of 7-alpha,25-OHC mediates the correct localization of B-cells during humoral immune responses. The sequence is that of G-protein coupled receptor 183-A (gpr183a) from Danio rerio (Zebrafish).